Reading from the N-terminus, the 203-residue chain is E3 ubiquitin-protein ligase rnf152-B (203 aa).

Residues 12–55 form an RING-type zinc finger; sequence CQICFNYYSPRRRPKLLDCKHTCCSVCLQQMRASQKDLRCPWCR. The helical transmembrane segment at 167–187 threads the bilayer; it reads SGVCTVILVACVLVFLLGIVL.

It belongs to the RNF152 family.

It is found in the lysosome membrane. The enzyme catalyses S-ubiquitinyl-[E2 ubiquitin-conjugating enzyme]-L-cysteine + [acceptor protein]-L-lysine = [E2 ubiquitin-conjugating enzyme]-L-cysteine + N(6)-ubiquitinyl-[acceptor protein]-L-lysine.. It functions in the pathway protein modification; protein ubiquitination. Functionally, E3 ubiquitin-protein ligase that acts as a negative regulator of mTORC1 signaling by mediating ubiquitination of RagA/RRAGA and RHEB. Catalyzes 'Lys-63'-linked polyubiquitination of RagA/RRAGA in response to amino acid starvation, thereby regulating mTORC1 signaling. Also mediates monoubiquitination of RHEB, promoting its association with the TSC-TBC complex and subsequent inhibition. Also mediates 'Lys-48'-linked polyubiquitination of target proteins and their subsequent targeting to the proteasome for degradation. This Xenopus laevis (African clawed frog) protein is E3 ubiquitin-protein ligase rnf152-B.